Reading from the N-terminus, the 95-residue chain is Aspartyl/glutamyl-tRNA(Asn/Gln) amidotransferase subunit C (95 aa).

Belongs to the GatC family. As to quaternary structure, heterotrimer of A, B and C subunits.

It carries out the reaction L-glutamyl-tRNA(Gln) + L-glutamine + ATP + H2O = L-glutaminyl-tRNA(Gln) + L-glutamate + ADP + phosphate + H(+). It catalyses the reaction L-aspartyl-tRNA(Asn) + L-glutamine + ATP + H2O = L-asparaginyl-tRNA(Asn) + L-glutamate + ADP + phosphate + 2 H(+). Its function is as follows. Allows the formation of correctly charged Asn-tRNA(Asn) or Gln-tRNA(Gln) through the transamidation of misacylated Asp-tRNA(Asn) or Glu-tRNA(Gln) in organisms which lack either or both of asparaginyl-tRNA or glutaminyl-tRNA synthetases. The reaction takes place in the presence of glutamine and ATP through an activated phospho-Asp-tRNA(Asn) or phospho-Glu-tRNA(Gln). This chain is Aspartyl/glutamyl-tRNA(Asn/Gln) amidotransferase subunit C, found in Cereibacter sphaeroides (strain ATCC 17023 / DSM 158 / JCM 6121 / CCUG 31486 / LMG 2827 / NBRC 12203 / NCIMB 8253 / ATH 2.4.1.) (Rhodobacter sphaeroides).